The following is a 259-amino-acid chain: Ribonuclease PH (259 aa).

Phosphate is bound by residues Arg88 and 126–128 (GTR).

Belongs to the RNase PH family. In terms of assembly, homohexameric ring arranged as a trimer of dimers.

It carries out the reaction tRNA(n+1) + phosphate = tRNA(n) + a ribonucleoside 5'-diphosphate. Phosphorolytic 3'-5' exoribonuclease that plays an important role in tRNA 3'-end maturation. Removes nucleotide residues following the 3'-CCA terminus of tRNAs; can also add nucleotides to the ends of RNA molecules by using nucleoside diphosphates as substrates, but this may not be physiologically important. Probably plays a role in initiation of 16S rRNA degradation (leading to ribosome degradation) during starvation. In Mycobacterium ulcerans (strain Agy99), this protein is Ribonuclease PH.